Reading from the N-terminus, the 177-residue chain is Large ribosomal subunit protein uL6 (177 aa).

This sequence belongs to the universal ribosomal protein uL6 family. Part of the 50S ribosomal subunit.

Functionally, this protein binds to the 23S rRNA, and is important in its secondary structure. It is located near the subunit interface in the base of the L7/L12 stalk, and near the tRNA binding site of the peptidyltransferase center. This Herminiimonas arsenicoxydans protein is Large ribosomal subunit protein uL6.